Consider the following 170-residue polypeptide: Protein AIG2 A (170 aa).

15 to 20 provides a ligand contact to substrate; that stretch reads YGSFQE. Residue Glu83 is the Proton acceptor of the active site. Residues 147 to 162 are compositionally biased toward basic and acidic residues; the sequence is KNPNGRSREEFEKFVQ. The interval 147–170 is disordered; that stretch reads KNPNGRSREEFEKFVQDDSSPASA.

This sequence belongs to the gamma-glutamylcyclotransferase family. In terms of tissue distribution, ubiquitous.

Putative gamma-glutamylcyclotransferase. The protein is Protein AIG2 A of Arabidopsis thaliana (Mouse-ear cress).